The sequence spans 142 residues: Lysosomal enzyme trafficking factor (142 aa).

The next 2 helical transmembrane spans lie at methionine 8–phenylalanine 28 and leucine 76–phenylalanine 96.

The protein belongs to the LYSET family.

Its subcellular location is the golgi apparatus membrane. Required for mannose-6-phosphate-dependent trafficking of lysosomal enzymes. LYSET bridges GlcNAc-1-phosphate transferase (GNPTAB), to the membrane-bound transcription factor site-1 protease (MBTPS1), thus allowing proteolytic activation of the GNPTAB. GNPTAB is involved in the regulation of M6P-dependent Golgi-to-lysosome trafficking of lysosomal enzymes. LYSET is thus an essential factor for maturation and delivery of lysosomal hydrolases. The polypeptide is Lysosomal enzyme trafficking factor (tmem251) (Danio rerio (Zebrafish)).